The chain runs to 268 residues: NH(3)-dependent NAD(+) synthetase (268 aa).

Position 46–53 (46–53 (GVSGGQDS)) interacts with ATP. A Mg(2+)-binding site is contributed by aspartate 52. Residue arginine 140 participates in deamido-NAD(+) binding. Residue threonine 160 coordinates ATP. Glutamate 165 is a binding site for Mg(2+). 2 residues coordinate deamido-NAD(+): lysine 173 and aspartate 180. ATP is bound at residue lysine 189. 260 to 261 (HK) is a deamido-NAD(+) binding site.

It belongs to the NAD synthetase family. As to quaternary structure, homodimer.

It carries out the reaction deamido-NAD(+) + NH4(+) + ATP = AMP + diphosphate + NAD(+) + H(+). The protein operates within cofactor biosynthesis; NAD(+) biosynthesis; NAD(+) from deamido-NAD(+) (ammonia route): step 1/1. Catalyzes the ATP-dependent amidation of deamido-NAD to form NAD. Uses ammonia as a nitrogen source. This chain is NH(3)-dependent NAD(+) synthetase, found in Buchnera aphidicola subsp. Acyrthosiphon pisum (strain Tuc7).